Here is a 330-residue protein sequence, read N- to C-terminus: Peptide transport system ATP-binding protein SapD (330 aa).

The region spanning 6–259 (IRNLTIEFKT…PHHPYTQALI (254 aa)) is the ABC transporter domain. Position 40–47 (40–47 (GESGSGKS)) interacts with ATP.

This sequence belongs to the ABC transporter superfamily.

Its subcellular location is the cell inner membrane. Involved in a peptide intake transport system that plays a role in the resistance to antimicrobial peptides. In Salmonella typhimurium (strain LT2 / SGSC1412 / ATCC 700720), this protein is Peptide transport system ATP-binding protein SapD.